The following is a 441-amino-acid chain: MAISSLSSPSGARVSSVTVKNKVLKTPCFFLPTSRGTVPHLTPDNVEEFDIPALYVGLEDCLDRLEASPILTNEGTIKKWIAAPSVQPTLLAPRRTSPLPSVSAGQSHINIVTASGAKKLTNDLYIKAVLKLCPELVIPLNDTPTSPPGVKRKPKIVERSVNWTTELLLALKATDAFNTTKVFFPVPDLDTQYLTPIFQFFQENQLANNIAGLAFSNNVNPLPADLVGLPRLSIQKFESPLEILKCIQRGIDIIVPDMITQATDAGVALTFSFPPPSKDVLNSKIELGLDMWDERFATDMEPLQSGCVCKTCRRYKRAYVRHLLQARELVAWILLQLHNVYAFTAFFQGIRASIQEGNFDEDVRKFEEIYMTSFPASHGFGPRKRGYQMDLTNVQPVENKPAWISMKSPLEKEIANEYEALKVTERKEDTQDYNEPELHNR.

The Zn(2+) site is built by cysteine 307, cysteine 309, cysteine 312, and histidine 338.

This sequence belongs to the queuine tRNA-ribosyltransferase family. QTRT2 subfamily. In terms of assembly, heterodimer of a catalytic subunit and an accessory subunit. Zn(2+) is required as a cofactor.

It is found in the cytoplasm. Its function is as follows. Non-catalytic subunit of the queuine tRNA-ribosyltransferase (TGT) that catalyzes the base-exchange of a guanine (G) residue with queuine (Q) at position 34 (anticodon wobble position) in tRNAs with GU(N) anticodons (tRNA-Asp, -Asn, -His and -Tyr), resulting in the hypermodified nucleoside queuosine (7-(((4,5-cis-dihydroxy-2-cyclopenten-1-yl)amino)methyl)-7-deazaguanosine). The polypeptide is Queuine tRNA-ribosyltransferase accessory subunit 2 (qtr2) (Schizosaccharomyces pombe (strain 972 / ATCC 24843) (Fission yeast)).